The chain runs to 185 residues: Elongation factor P (185 aa).

This sequence belongs to the elongation factor P family.

The protein resides in the cytoplasm. It functions in the pathway protein biosynthesis; polypeptide chain elongation. Its function is as follows. Involved in peptide bond synthesis. Stimulates efficient translation and peptide-bond synthesis on native or reconstituted 70S ribosomes in vitro. Probably functions indirectly by altering the affinity of the ribosome for aminoacyl-tRNA, thus increasing their reactivity as acceptors for peptidyl transferase. This is Elongation factor P from Acetivibrio thermocellus (strain ATCC 27405 / DSM 1237 / JCM 9322 / NBRC 103400 / NCIMB 10682 / NRRL B-4536 / VPI 7372) (Clostridium thermocellum).